Here is a 544-residue protein sequence, read N- to C-terminus: Terpene synthase 9 (544 aa).

Mg(2+) is bound by residues aspartate 296, aspartate 300, and glutamate 449. Residues 296-300 (DDTFD) carry the DDXXD motif motif.

This sequence belongs to the terpene synthase family. Tpsa subfamily. Mg(2+) serves as cofactor. Mn(2+) is required as a cofactor.

It carries out the reaction (2E,6E)-farnesyl diphosphate = (1E,4E)-germacrene B + diphosphate. The enzyme catalyses (2E)-geranyl diphosphate = terpinolene + diphosphate. It catalyses the reaction (2E)-geranyl diphosphate = limonene + diphosphate. The catalysed reaction is (2E)-geranyl diphosphate = beta-myrcene + diphosphate. It carries out the reaction (2Z,6Z)-farnesyl diphosphate = germacrene A + diphosphate. The enzyme catalyses (2Z,6Z)-farnesyl diphosphate = alpha-humulene + diphosphate. It functions in the pathway secondary metabolite biosynthesis; terpenoid biosynthesis. In terms of biological role, sesquiterpene synthase involved in the biosynthesis of volatile compounds. Mediates the conversion of (2E,6E)-farnesyl diphosphate (FPP) into (1E,4E)-germacrene B, but also smaller amounts of germacrene A and C, and of (2Z,6Z)-farnesyl diphosphate ((ZZ)-FPP) into alpha-humulene, germacrene A and germacrene B. Can act with a low efficiency as a monoterpene synthase with geranyl diphosphate (GPP) as substrate, thus producing beta-myrcene, limonene and terpinolene. The sequence is that of Terpene synthase 9 from Solanum habrochaites (Wild tomato).